Consider the following 276-residue polypeptide: Shikimate dehydrogenase (NADP(+)) (276 aa).

Shikimate-binding positions include 20–22 (SRS) and Thr67. Catalysis depends on Lys71, which acts as the Proton acceptor. Residue Asp83 coordinates NADP(+). Shikimate contacts are provided by Asn92 and Asp107. NADP(+) is bound by residues 131–135 (GAGGA) and Ile217. Residue Tyr219 coordinates shikimate. Gly240 serves as a coordination point for NADP(+).

It belongs to the shikimate dehydrogenase family. In terms of assembly, homodimer.

The enzyme catalyses shikimate + NADP(+) = 3-dehydroshikimate + NADPH + H(+). It functions in the pathway metabolic intermediate biosynthesis; chorismate biosynthesis; chorismate from D-erythrose 4-phosphate and phosphoenolpyruvate: step 4/7. In terms of biological role, involved in the biosynthesis of the chorismate, which leads to the biosynthesis of aromatic amino acids. Catalyzes the reversible NADPH linked reduction of 3-dehydroshikimate (DHSA) to yield shikimate (SA). The polypeptide is Shikimate dehydrogenase (NADP(+)) (Acidiphilium cryptum (strain JF-5)).